The following is a 687-amino-acid chain: Protein-glutamine gamma-glutamyltransferase 2 (687 aa).

At Ala2 the chain carries N-acetylalanine. Ser60 is subject to Phosphoserine. Disulfide bonds link Cys230–Cys370 and Cys370–Cys371. Residues Cys277, His335, and Asp358 contribute to the active site. 5 residues coordinate Ca(2+): Asn398, Asp400, Glu437, Glu447, and Glu452. An N6-acetyllysine modification is found at Lys468. 476–483 (RIRVGQSM) contacts GTP. Glu539 is a binding site for Ca(2+). 580–583 (RDLY) contacts GTP. Gln633 participates in a covalent cross-link: Isoglutamyl lysine isopeptide (Gln-Lys) (interchain with K-?).

The protein belongs to the transglutaminase superfamily. Transglutaminase family. Monomer. Interacts with phospholipase C; promoting alpha-1 adrenergic receptor signaling. Interacts with PLCD1. As to quaternary structure, homooligomer. It depends on Ca(2+) as a cofactor. Post-translationally, disulfide bond formation inactivates the calcium-dependent acyltransferase activity. Cys-370 can form disulfide bonds with both Cys-230 and Cys-371: formation of a disulfide bond between Cys-230 and Cys-370 facilitates formation of the disulfide between Cys-370 and Cys-371, which promotes inactivation of the acyltransferase activity. May also form interchain disulfids between Cys-230 and Cys-370. Ca(2+) protects against disulfide bond formation and inactivation. Auto-transglutaminated: Forms covalent cross-links mediated by transglutaminase between Gln-633 and the epsilon-amino group of a lysine residue of itself or HMGB1, forming homopolymers and heteropolymers, respectively. In terms of processing, S-nitrosylated, leading to inactivation of the acyltransferase activity.

It is found in the cytoplasm. The protein resides in the cytosol. It localises to the nucleus. The protein localises to the chromosome. Its subcellular location is the secreted. It is found in the extracellular space. The protein resides in the extracellular matrix. It localises to the cell membrane. The protein localises to the mitochondrion. Its subcellular location is the perinuclear region. The catalysed reaction is L-glutaminyl-[protein] + L-lysyl-[protein] = [protein]-L-lysyl-N(6)-5-L-glutamyl-[protein] + NH4(+). It carries out the reaction L-glutaminyl-[protein] + serotonin = 5-serotonyl-L-glutamyl-[protein] + NH4(+). The enzyme catalyses L-glutaminyl-[protein] + dopamine = 5-dopaminyl-L-glutamyl-[protein] + NH4(+). It catalyses the reaction L-glutaminyl-[protein] + histamine = 5-histaminyl-L-glutamyl-[protein] + NH4(+). The catalysed reaction is L-glutaminyl-[protein] + (R)-noradrenaline = 5-(R)-noradrenalinyl-L-glutamyl-[protein] + NH4(+). It carries out the reaction L-glutaminyl-[protein] + H2O = L-glutamyl-[protein] + NH4(+). With respect to regulation, acyltransferase activity is regulated by the binding of GTP and Ca(2+): inactivated by GTP, which stabilizes its closed structure, thereby obstructing the accessibility of substrates to the active sites. In contrast, Ca(2+) acts as a cofactor by inducing conformational change to the active open form. In absence of Ca(2+), Mg(2+) may bind Ca(2+)-binding sites, promoting GTP-binding and subsequent inhibition of the acyltransferase activity. Extracellularly reduced and activated by CLIC3. Specifically inhibited by compound VA4 ((S)-Benzyl (6-Acrylamido-1-(4-((5-(dimethylamino)naphthalen-1-yl)sulfonyl)piperazin-1-yl)-1-oxohexan-2-yl)carbamate), which specifically abolishes both the transamidation and GTP-binding activities. Functionally, calcium-dependent acyltransferase that catalyzes the formation of covalent bonds between peptide-bound glutamine and various primary amines, such as gamma-amino group of peptide-bound lysine, or mono- and polyamines, thereby producing cross-linked or aminated proteins, respectively. Involved in many biological processes, such as bone development, angiogenesis, wound healing, cellular differentiation, chromatin modification and apoptosis. Acts as a protein-glutamine gamma-glutamyltransferase by mediating the cross-linking of proteins, such as ACO2, HSPB6, FN1, HMGB1, RAP1GDS1, SLC25A4/ANT1, SPP1 and WDR54. Under physiological conditions, the protein cross-linking activity is inhibited by GTP; inhibition is relieved by Ca(2+) in response to various stresses. When secreted, catalyzes cross-linking of proteins of the extracellular matrix, such as FN1 and SPP1 resulting in the formation of scaffolds. Plays a key role during apoptosis, both by (1) promoting the cross-linking of cytoskeletal proteins resulting in condensation of the cytoplasm, and by (2) mediating cross-linking proteins of the extracellular matrix, resulting in the irreversible formation of scaffolds that stabilize the integrity of the dying cells before their clearance by phagocytosis, thereby preventing the leakage of harmful intracellular components. In addition to protein cross-linking, can use different monoamine substrates to catalyze a vast array of protein post-translational modifications: mediates aminylation of serotonin, dopamine, noradrenaline or histamine into glutamine residues of target proteins to generate protein serotonylation, dopaminylation, noradrenalinylation or histaminylation, respectively. Mediates protein serotonylation of small GTPases during activation and aggregation of platelets, leading to constitutive activation of these GTPases. Plays a key role in chromatin organization by mediating serotonylation and dopaminylation of histone H3. Catalyzes serotonylation of 'Gln-5' of histone H3 (H3Q5ser) during serotonergic neuron differentiation, thereby facilitating transcription. Acts as a mediator of neurotransmission-independent role of nuclear dopamine in ventral tegmental area (VTA) neurons: catalyzes dopaminylation of 'Gln-5' of histone H3 (H3Q5dop), thereby regulating relapse-related transcriptional plasticity in the reward system. Regulates vein remodeling by mediating serotonylation and subsequent inactivation of ATP2A2/SERCA2. Also acts as a protein deamidase by mediating the side chain deamidation of specific glutamine residues of proteins to glutamate. Catalyzes specific deamidation of protein gliadin, a component of wheat gluten in the diet. May also act as an isopeptidase cleaving the previously formed cross-links. Also able to participate in signaling pathways independently of its acyltransferase activity: acts as a signal transducer in alpha-1 adrenergic receptor-mediated stimulation of phospholipase C-delta (PLCD) activity and is required for coupling alpha-1 adrenergic agonists to the stimulation of phosphoinositide lipid metabolism. In terms of biological role, has cytotoxic activity: is able to induce apoptosis independently of its acyltransferase activity. The protein is Protein-glutamine gamma-glutamyltransferase 2 of Homo sapiens (Human).